A 370-amino-acid polypeptide reads, in one-letter code: Probable butyrate kinase (370 aa).

It belongs to the acetokinase family.

It localises to the cytoplasm. The catalysed reaction is butanoate + ATP = butanoyl phosphate + ADP. The sequence is that of Probable butyrate kinase from Elusimicrobium minutum (strain Pei191).